Consider the following 672-residue polypeptide: MDKQAAERRIQELHKEINRHNYLYYVEDRPEINDAEYDLLLRELQQLEKAYPDLVTADSPTQRVGAAPLEKFSQVTHRMPMLSLENAFNEEEMHDFDERIKRFLGLAAGDEIEYVCEPKMDGLAVELVYENGDFTVGSTRGDGYVGEDVTQNLRTVKTIPLSLAIATPPRLFEVRGEVYLGLAPFQKLNVEREEAGDPPFANPRNAAAGSLRQLDSRITARRPLSIFCYAAGSLEGHEFTSQSDLLNTIPGWGLPVNPLIRKVSGIGGVLAYYHEMSEKRESLPYEIDGVVVKVDSFDLQRELGEKTRSPRWAIAWKFPPRQAVTVVEEIVPQVGRTGVITPVAHLRPVEVSGVMVSRATLHNWEEMEKKDIRKGDTVVVERAGDVIPAVVKVITEKRKGDEQPLPIPANCPECGSEVVKIPGEVAVRCLGLSCPAQIRETIIHFASRHAMDIDGMGDKYIEQLLKLGLVKNVADLYYLKKDDFMRFERMGDKLAENLLGAIETSKQRELSRFIYALGIRHVGEHTAKLLANAFGSMENLEHASEEELLSIREVGPQVAQSIRTFFHNRNNIEVIDRMFNAGVKPSVEEKRVGGRFTGKTFVFTGALTRFTRDDAKRMVENEGGHAAGSVSKKTDFVVAGAEAGSKLDKARQLGVKVLTEDEFLAMLGVCRT.

Residues Asp34–Asp38, Ser83–Leu84, and Glu117 contribute to the NAD(+) site. Lys119 (N6-AMP-lysine intermediate) is an active-site residue. Positions 140, 177, 293, and 317 each coordinate NAD(+). Residues Cys411, Cys414, Cys429, and Cys434 each contribute to the Zn(2+) site. The BRCT domain occupies Arg591 to Thr672.

This sequence belongs to the NAD-dependent DNA ligase family. LigA subfamily. Requires Mg(2+) as cofactor. Mn(2+) is required as a cofactor.

The catalysed reaction is NAD(+) + (deoxyribonucleotide)n-3'-hydroxyl + 5'-phospho-(deoxyribonucleotide)m = (deoxyribonucleotide)n+m + AMP + beta-nicotinamide D-nucleotide.. Its function is as follows. DNA ligase that catalyzes the formation of phosphodiester linkages between 5'-phosphoryl and 3'-hydroxyl groups in double-stranded DNA using NAD as a coenzyme and as the energy source for the reaction. It is essential for DNA replication and repair of damaged DNA. In Geotalea uraniireducens (strain Rf4) (Geobacter uraniireducens), this protein is DNA ligase.